A 402-amino-acid polypeptide reads, in one-letter code: Zinc finger protein 587B (402 aa).

Positions 15 to 91 (VTFEDVAVKF…PVTGVSPKKA (77 aa)) constitute a KRAB domain. Residues 92–114 (HPCEMCGPILGDILHVADHQGTH) form a C2H2-type 1 zinc finger. The C2H2-type 2; degenerate zinc finger occupies 120–142 (HRCEAWGNKLYDSGNFHQHQNEH). Residues K177, K200, and K253 each participate in a glycyl lysine isopeptide (Lys-Gly) (interchain with G-Cter in SUMO2) cross-link. C2H2-type zinc fingers lie at residues 242-264 (YVCC…QRVH), 270-292 (YECG…QQFH), 298-320 (YGCE…QKVH), 326-348 (YECG…QRIH), and 354-383 (YKCG…WVDH). A Glycyl lysine isopeptide (Lys-Gly) (interchain with G-Cter in SUMO2) cross-link involves residue K366.

It belongs to the krueppel C2H2-type zinc-finger protein family.

It localises to the nucleus. In terms of biological role, may be involved in transcriptional regulation. The protein is Zinc finger protein 587B (ZNF587B) of Homo sapiens (Human).